The sequence spans 957 residues: Atromentin synthetase (957 aa).

Positions 59-464 are adenylation (A) domain; the sequence is SVQARTFQDF…SGRIKDTVIV (406 aa). In terms of domain architecture, Carrier spans 596–674; the sequence is TPSTDDEKAL…DLAKYVNGLV (79 aa). The segment at 601-671 is thiolation and peptide carrier (T) domain; sequence DEKALAAIYA…IVSDLAKYVN (71 aa). Ser-633 bears the O-(pantetheine 4'-phosphoryl)serine mark. The thioesterase (TE) domain stretch occupies residues 697–947; that stretch reads PIFFVHPGVG…FDHVPQFQKI (251 aa).

Belongs to the ATP-dependent AMP-binding enzyme family.

The protein operates within secondary metabolite biosynthesis. Functionally, the L-tyrosine:2-oxoglutarate aminotransferase atrD and the atromentin synthetase atrA catalyze consecutive steps to turn over L-tyrosine into atromentin, which represents the generic precursor molecule for the entire terphenylquinone and pulvinic acid family of pigments, which are widely distributed secondary metabolites in homobasidiomycetes. The first step is catalyzed by atrD which converts L-tyrosine in to 4-hydroxyphenylpyruvate (4-HPP). Adenylation of two 4-HPP monomers by the atrA adenylation (A) domain, ester bond formation between monomers and atrA, and symmetric C-C-bond formation between two monomers by atrA leads to atromentin. This is Atromentin synthetase from Tapinella panuoides (Oyster rollrim mushroom).